The primary structure comprises 217 residues: Ras-related protein Rab11B (217 aa).

21–28 lines the GTP pocket; sequence GDSGVGKS. The Effector region motif lies at 43–51; that stretch reads SKSTIGVEF. GTP contacts are provided by residues 69-73 and 127-130; these read DTAGQ and NKAD. S-geranylgeranyl cysteine attachment occurs at residues Cys-214 and Cys-215.

It belongs to the small GTPase superfamily. Rab family.

It is found in the cell membrane. This is Ras-related protein Rab11B (RAB11B) from Nicotiana tabacum (Common tobacco).